Reading from the N-terminus, the 369-residue chain is Bi-functional coumaroyl CoA and feruloyl CoA ortho-hydroxylase Diox2 (369 aa).

The Fe2OG dioxygenase domain maps to 215–318 (GSRRVNLNYY…RISVPLFVNP (104 aa)). Tyrosine 224 provides a ligand contact to 2-oxoglutarate. Fe cation contacts are provided by histidine 239, aspartate 241, and histidine 299. 2-oxoglutarate is bound by residues arginine 309 and serine 311.

Belongs to the iron/ascorbate-dependent oxidoreductase family. L-ascorbate is required as a cofactor. The cofactor is Fe(2+).

The enzyme catalyses (E)-4-coumaroyl-CoA + 2-oxoglutarate + O2 = (E)-2,4-dihydroxycinnamoyl-CoA + succinate + CO2. The catalysed reaction is (E)-feruloyl-CoA + 2-oxoglutarate + O2 = (E)-6-hydroxyferuloyl-CoA + succinate + CO2. It functions in the pathway phenylpropanoid metabolism. 2-oxoglutarate (OG)- and Fe(II)-dependent dioxygenase (2OGD) involved in scopoletin and umbelliferone biosynthesis. Converts feruloyl CoA into 6'-hydroxyferuloyl CoA, and p-coumaroyl CoA into 2,4-dihydroxycinnamoyl-CoA. This chain is Bi-functional coumaroyl CoA and feruloyl CoA ortho-hydroxylase Diox2, found in Ruta graveolens (Common rue).